The following is a 395-amino-acid chain: LIM/homeobox protein Lhx3 (395 aa).

LIM zinc-binding domains are found at residues 28-78 and 87-141; these read CAGC…CKED and CAAC…CKAD. The homeobox DNA-binding region spans 154–213; sequence AKRPRTTITAKQLETLKNAYNNSPKPARHVREQLSSETGLDMRVVQVWFQNRRAKEKRLK. 2 disordered regions span residues 209–325 and 348–395; these read EKRL…LQAL and GGQG…HAQF. Residues 257 to 276 show a composition bias toward polar residues; it reads DEPSMSEMSHSNGIYSNLSE.

Its subcellular location is the nucleus. In terms of biological role, transcription factor. Defines subclasses of motoneurons that segregate into columns in the spinal cord and select distinct axon pathways. Acts in conjunction with LIM-1, ISL-1 and ISL-2. In Gallus gallus (Chicken), this protein is LIM/homeobox protein Lhx3 (LHX3).